The following is a 789-amino-acid chain: Glycerol-3-phosphate acyltransferase (789 aa).

The HXXXXD motif motif lies at Ser275 to Ile280.

This sequence belongs to the GPAT/DAPAT family.

It is found in the cell membrane. The enzyme catalyses sn-glycerol 3-phosphate + an acyl-CoA = a 1-acyl-sn-glycero-3-phosphate + CoA. The protein operates within phospholipid metabolism; CDP-diacylglycerol biosynthesis; CDP-diacylglycerol from sn-glycerol 3-phosphate: step 1/3. In Mycobacterium tuberculosis (strain ATCC 25177 / H37Ra), this protein is Glycerol-3-phosphate acyltransferase.